An 82-amino-acid polypeptide reads, in one-letter code: Penaeidin-3h (82 aa).

A signal peptide spans 1-19 (MRLVVCLVFLASFALVCQG). Q20 bears the Pyrrolidone carboxylic acid mark. 2 disulfide bridges follow: C55-C73 and C67-C74. S81 carries the serine amide modification.

It belongs to the penaeidin family.

The protein resides in the cytoplasmic granule. Antibacterial and antifungal activity. Presents chitin-binding activity. This is Penaeidin-3h from Penaeus vannamei (Whiteleg shrimp).